Here is an 82-residue protein sequence, read N- to C-terminus: Small ribosomal subunit protein bS16 (82 aa).

It belongs to the bacterial ribosomal protein bS16 family.

In Erwinia tasmaniensis (strain DSM 17950 / CFBP 7177 / CIP 109463 / NCPPB 4357 / Et1/99), this protein is Small ribosomal subunit protein bS16.